Here is a 484-residue protein sequence, read N- to C-terminus: Malonate-semialdehyde dehydrogenase 1 (484 aa).

Residues F154, K178, E181, R182, and S231 each coordinate NAD(+). Catalysis depends on C286, which acts as the Nucleophile. E384 contacts NAD(+).

The protein belongs to the aldehyde dehydrogenase family. IolA subfamily. Homotetramer.

It catalyses the reaction 3-oxopropanoate + NAD(+) + CoA + H2O = hydrogencarbonate + acetyl-CoA + NADH + H(+). The enzyme catalyses 2-methyl-3-oxopropanoate + NAD(+) + CoA + H2O = propanoyl-CoA + hydrogencarbonate + NADH + H(+). The protein operates within polyol metabolism; myo-inositol degradation into acetyl-CoA; acetyl-CoA from myo-inositol: step 7/7. Its function is as follows. Catalyzes the oxidation of malonate semialdehyde (MSA) and methylmalonate semialdehyde (MMSA) into acetyl-CoA and propanoyl-CoA, respectively. Is involved in a myo-inositol catabolic pathway. Bicarbonate, and not CO2, is the end-product of the enzymatic reaction. The polypeptide is Malonate-semialdehyde dehydrogenase 1 (Bacillus licheniformis (strain ATCC 14580 / DSM 13 / JCM 2505 / CCUG 7422 / NBRC 12200 / NCIMB 9375 / NCTC 10341 / NRRL NRS-1264 / Gibson 46)).